Consider the following 325-residue polypeptide: ATP phosphoribosyltransferase (325 aa).

The protein belongs to the ATP phosphoribosyltransferase family. Long subfamily. Mg(2+) is required as a cofactor.

It is found in the cytoplasm. It catalyses the reaction 1-(5-phospho-beta-D-ribosyl)-ATP + diphosphate = 5-phospho-alpha-D-ribose 1-diphosphate + ATP. The protein operates within amino-acid biosynthesis; L-histidine biosynthesis; L-histidine from 5-phospho-alpha-D-ribose 1-diphosphate: step 1/9. With respect to regulation, feedback inhibited by histidine. In terms of biological role, catalyzes the condensation of ATP and 5-phosphoribose 1-diphosphate to form N'-(5'-phosphoribosyl)-ATP (PR-ATP). Has a crucial role in the pathway because the rate of histidine biosynthesis seems to be controlled primarily by regulation of HisG enzymatic activity. In Afipia carboxidovorans (strain ATCC 49405 / DSM 1227 / KCTC 32145 / OM5) (Oligotropha carboxidovorans), this protein is ATP phosphoribosyltransferase.